The following is a 245-amino-acid chain: uncharacterized protein (245 aa).

Residues 1–19 (MKLTQFISYAILSLSGVQA) form the signal peptide.

It is found in the secreted. This is an uncharacterized protein from Arthroderma benhamiae (strain ATCC MYA-4681 / CBS 112371) (Trichophyton mentagrophytes).